Consider the following 122-residue polypeptide: Basic phospholipase A2 (122 aa).

Cystine bridges form between cysteine 26-cysteine 115, cysteine 28-cysteine 44, cysteine 43-cysteine 95, cysteine 49-cysteine 122, cysteine 50-cysteine 88, cysteine 57-cysteine 81, and cysteine 75-cysteine 86. Tyrosine 27, glycine 29, and glycine 31 together coordinate Ca(2+). Histidine 47 is an active-site residue. Aspartate 48 lines the Ca(2+) pocket. Aspartate 89 is an active-site residue.

This sequence belongs to the phospholipase A2 family. Group II subfamily. D49 sub-subfamily. In terms of assembly, homodimer. Ca(2+) is required as a cofactor. As to expression, expressed by the venom gland.

It localises to the secreted. It catalyses the reaction a 1,2-diacyl-sn-glycero-3-phosphocholine + H2O = a 1-acyl-sn-glycero-3-phosphocholine + a fatty acid + H(+). Snake venom phospholipase A2 (PLA2) that inhibits neuromuscular transmission by blocking acetylcholine release from the nerve termini. PLA2 catalyzes the calcium-dependent hydrolysis of the 2-acyl groups in 3-sn-phosphoglycerides. The chain is Basic phospholipase A2 from Gloydius blomhoffii (Mamushi).